The chain runs to 470 residues: 3-isopropylmalate dehydratase large subunit (470 aa).

Positions 349, 409, and 412 each coordinate [4Fe-4S] cluster.

This sequence belongs to the aconitase/IPM isomerase family. LeuC type 1 subfamily. In terms of assembly, heterodimer of LeuC and LeuD. It depends on [4Fe-4S] cluster as a cofactor.

It catalyses the reaction (2R,3S)-3-isopropylmalate = (2S)-2-isopropylmalate. It functions in the pathway amino-acid biosynthesis; L-leucine biosynthesis; L-leucine from 3-methyl-2-oxobutanoate: step 2/4. Functionally, catalyzes the isomerization between 2-isopropylmalate and 3-isopropylmalate, via the formation of 2-isopropylmaleate. The sequence is that of 3-isopropylmalate dehydratase large subunit from Afipia carboxidovorans (strain ATCC 49405 / DSM 1227 / KCTC 32145 / OM5) (Oligotropha carboxidovorans).